The primary structure comprises 176 residues: Nicotinamide-nucleotide adenylyltransferase (176 aa).

This sequence belongs to the archaeal NMN adenylyltransferase family.

It is found in the cytoplasm. It catalyses the reaction beta-nicotinamide D-ribonucleotide + ATP + H(+) = diphosphate + NAD(+). The protein operates within cofactor biosynthesis; NAD(+) biosynthesis; NAD(+) from nicotinamide D-ribonucleotide: step 1/1. This Halorubrum lacusprofundi (strain ATCC 49239 / DSM 5036 / JCM 8891 / ACAM 34) protein is Nicotinamide-nucleotide adenylyltransferase.